A 338-amino-acid polypeptide reads, in one-letter code: MITIEQLISQIEQRQPVLNKAELSAEQRRLSLEGIGNLTMANRQQLSFLANPHYLSSLANTDAGAVLITEEHHEEVPNDTVALIVAVPYLAYASVSQIFARQHSFSGIHPTAFIADSAVIGNKVTIGAFCVIGEQVQIGDRSVLEAHVVIEDNTTIGTDGVIKSQVVIGHDCIIGSHVRLHAGVTIGSEGFGFAPTANPSVTGWERIAQLGRVLIGDHVRIGSQTCIDRGAIDDTVIGNHVIIDNLVQVAHNVRIGDGTAIAAHTGIAGSTTIGKRCIIGGAVGITGHIDITDDVTLSGMTMVTKSITTAGSYSSGTAAMPTANWRRAAVRFRQLGRD.

Histidine 251 acts as the Proton acceptor in catalysis.

This sequence belongs to the transferase hexapeptide repeat family. LpxD subfamily. As to quaternary structure, homotrimer.

The enzyme catalyses a UDP-3-O-[(3R)-3-hydroxyacyl]-alpha-D-glucosamine + a (3R)-hydroxyacyl-[ACP] = a UDP-2-N,3-O-bis[(3R)-3-hydroxyacyl]-alpha-D-glucosamine + holo-[ACP] + H(+). It participates in bacterial outer membrane biogenesis; LPS lipid A biosynthesis. Catalyzes the N-acylation of UDP-3-O-acylglucosamine using 3-hydroxyacyl-ACP as the acyl donor. Is involved in the biosynthesis of lipid A, a phosphorylated glycolipid that anchors the lipopolysaccharide to the outer membrane of the cell. This is UDP-3-O-acylglucosamine N-acyltransferase from Psychrobacter cryohalolentis (strain ATCC BAA-1226 / DSM 17306 / VKM B-2378 / K5).